A 316-amino-acid polypeptide reads, in one-letter code: Lipoyl synthase (316 aa).

Residues C61, C66, C72, C87, C91, C94, and S301 each coordinate [4Fe-4S] cluster. Residues F73–S290 form the Radical SAM core domain.

The protein belongs to the radical SAM superfamily. Lipoyl synthase family. The cofactor is [4Fe-4S] cluster.

The protein localises to the cytoplasm. The catalysed reaction is [[Fe-S] cluster scaffold protein carrying a second [4Fe-4S](2+) cluster] + N(6)-octanoyl-L-lysyl-[protein] + 2 oxidized [2Fe-2S]-[ferredoxin] + 2 S-adenosyl-L-methionine + 4 H(+) = [[Fe-S] cluster scaffold protein] + N(6)-[(R)-dihydrolipoyl]-L-lysyl-[protein] + 4 Fe(3+) + 2 hydrogen sulfide + 2 5'-deoxyadenosine + 2 L-methionine + 2 reduced [2Fe-2S]-[ferredoxin]. The protein operates within protein modification; protein lipoylation via endogenous pathway; protein N(6)-(lipoyl)lysine from octanoyl-[acyl-carrier-protein]: step 2/2. Functionally, catalyzes the radical-mediated insertion of two sulfur atoms into the C-6 and C-8 positions of the octanoyl moiety bound to the lipoyl domains of lipoate-dependent enzymes, thereby converting the octanoylated domains into lipoylated derivatives. This chain is Lipoyl synthase, found in Nitrosospira multiformis (strain ATCC 25196 / NCIMB 11849 / C 71).